The following is a 486-amino-acid chain: MTIEHTQDLAQIRAMVPEMRRVKSIHFIGIGGAGMSGIAEVLLNEGYQITGSDIAQNPVTERLVSKGATVYVGHQASNVADASVVVVSTAINEENPEIIAAREARTPIVRRAEMLAELMRFRHGIAVAGTHGKTTTTALVTQIYSEAGLDPTFVNGGLVKSAGTNARLGSSRILIAEADESDASFLHLQPMVSIVTNIEADHMDTYGGDFETLKQTFIDFLHNLPFYGQAVMCVDDPVVRELIPQVSRQVITYGFSEDADIRIENYVQEGQQGKFTVVREGKANLDITLNIPGRHNALNASAAIAVATEDDISDEAILKAMAGTEGTGRRFDHLGEYETGKGVAMLVDDYGHHPTEVDVTIQAARSGWTDKRLVMIFQPHRYSRTRDLYDDFANVLEQVDVLILLDVYSAGEKPIAGADGRSLSRTIRGRGKIDPIFVADINALPSALANVIQGGDLVLTQGAGDVGRVAKQLESLQLDINKMQNA.

129 to 135 (GTHGKTT) is a binding site for ATP.

Belongs to the MurCDEF family.

It localises to the cytoplasm. The catalysed reaction is UDP-N-acetyl-alpha-D-muramate + L-alanine + ATP = UDP-N-acetyl-alpha-D-muramoyl-L-alanine + ADP + phosphate + H(+). It functions in the pathway cell wall biogenesis; peptidoglycan biosynthesis. Cell wall formation. This Vibrio atlanticus (strain LGP32) (Vibrio splendidus (strain Mel32)) protein is UDP-N-acetylmuramate--L-alanine ligase.